The primary structure comprises 404 residues: MPIKILMPALSPTMKDGNLARWLKKEGDKVNPGEVIAEIETDKATMEVESVDEGILAKIIIPQNSQNVPVNSLIAVLSEEGESTADIDAFIAKNNSVSLSLKTDTTLKKANESITNVEVVKHDLSKIFASPLAKRLAKIRNIRLESVQGSGPHGRIVKQDILSYSPSTAYNRDTEEYRSVPNNNIRQIIAKRLLESKQTVPHFYLSIECNVDKLLDIREDINKSFSEDKLTKISVNDFIILAVAKALQEVPNANASWAEDAIRYYNNVDISVAVAIENGIVTPIIKDANKKNIIELSHEMKILIKKAKDNKLTPVEFQGGGFTISNLGMYGIKNFNAIINTPQSCIMGVGASTKRAIVKNDQIIIATIMDVTLSADHRVIDGAVSAEFLASFKRFIEHPVLMLI.

A Lipoyl-binding domain is found at proline 2 to serine 78. At lysine 43 the chain carries N6-lipoyllysine. The Peripheral subunit-binding (PSBD) domain occupies phenylalanine 128 to serine 165. Residue histidine 377 is part of the active site.

The protein belongs to the 2-oxoacid dehydrogenase family. Forms a 24-polypeptide structural core with octahedral symmetry. Requires (R)-lipoate as cofactor.

The enzyme catalyses N(6)-[(R)-dihydrolipoyl]-L-lysyl-[protein] + acetyl-CoA = N(6)-[(R)-S(8)-acetyldihydrolipoyl]-L-lysyl-[protein] + CoA. Its function is as follows. The pyruvate dehydrogenase complex catalyzes the overall conversion of pyruvate to acetyl-CoA and CO(2). It contains multiple copies of three enzymatic components: pyruvate dehydrogenase (E1), dihydrolipoamide acetyltransferase (E2) and lipoamide dehydrogenase (E3). In Rickettsia typhi (strain ATCC VR-144 / Wilmington), this protein is Dihydrolipoyllysine-residue acetyltransferase component of pyruvate dehydrogenase complex (pdhC).